The chain runs to 257 residues: Homeobox protein ceh-36 (257 aa).

Positions 33–49 (SATTSSTTMAPMAPNSE) are enriched in low complexity. Disordered regions lie at residues 33–63 (SATT…TSFN) and 113–156 (DRNN…GTPE). A DNA-binding region (homeobox) is located at residues 55-117 (GRRERTSFNR…NRRAKDRNNK (63 aa)). A compositionally biased stretch (low complexity) spans 123–137 (HPGSTSSRSSNGSPH).

This sequence belongs to the paired homeobox family. As to quaternary structure, interacts with sox-2. As to expression, expressed in ASE and AWC chemosensory neurons. Expressed left-right asymmetrically in the embryo, in the grandmother cell and the mother cell to the MI pharyngeal motorneuron but in neither analogous precursors of the e3D neuron.

The protein localises to the nucleus. Probable transcription factor, acting as a progenitor identity factor regulating the development of lineally-related embryonic cells including glial, excretory and neuronal cells. Mediates chemosensory function of ASE and AWC neurons. In ASE neurons, required to diversify the fate of the ASEL neurons from the ASER neurons. Acts cell-autonomously to establish a neuronal left right asymmetry, possibly promoting asymmetric expression of the helix-loop-helix proteins ngn-1 and hlh-2. In cooperation with the transcription factor sox-2, required for the differentiation of AWC olfactory neurons. May regulate the expression of sox-2 in AWC olfactory neurons. The chain is Homeobox protein ceh-36 from Caenorhabditis elegans.